Reading from the N-terminus, the 427-residue chain is Tol-Pal system protein TolB (427 aa).

The signal sequence occupies residues 1-23; sequence MKLIARLMSMCAVLFFAINSAYA.

It belongs to the TolB family. The Tol-Pal system is composed of five core proteins: the inner membrane proteins TolA, TolQ and TolR, the periplasmic protein TolB and the outer membrane protein Pal. They form a network linking the inner and outer membranes and the peptidoglycan layer.

It is found in the periplasm. Its function is as follows. Part of the Tol-Pal system, which plays a role in outer membrane invagination during cell division and is important for maintaining outer membrane integrity. This chain is Tol-Pal system protein TolB, found in Actinobacillus succinogenes (strain ATCC 55618 / DSM 22257 / CCUG 43843 / 130Z).